Reading from the N-terminus, the 214-residue chain is Large ribosomal subunit protein uL4c (214 aa).

The disordered stretch occupies residues 42 to 81 (VKQSNEKRQGSANTKTRSEVRGGGRKPWRQKGTGRARAGS). Residues 64–75 (GGRKPWRQKGTG) are compositionally biased toward basic residues.

The protein belongs to the universal ribosomal protein uL4 family. As to quaternary structure, part of the 50S ribosomal subunit.

It is found in the plastid. The protein resides in the chloroplast. Functionally, probably binds the 23S rRNA. This is Large ribosomal subunit protein uL4c (rpl4) from Pyropia yezoensis (Susabi-nori).